The following is a 393-amino-acid chain: Acetylornithine aminotransferase (393 aa).

Residues 96-97 (GT) and F129 each bind pyridoxal 5'-phosphate. R132 is a binding site for N(2)-acetyl-L-ornithine. Pyridoxal 5'-phosphate is bound at residue 214–217 (DEVQ). Residue K243 is modified to N6-(pyridoxal phosphate)lysine. Residue S271 coordinates N(2)-acetyl-L-ornithine. Pyridoxal 5'-phosphate is bound at residue T272.

It belongs to the class-III pyridoxal-phosphate-dependent aminotransferase family. ArgD subfamily. As to quaternary structure, homodimer. Pyridoxal 5'-phosphate serves as cofactor.

Its subcellular location is the cytoplasm. The enzyme catalyses N(2)-acetyl-L-ornithine + 2-oxoglutarate = N-acetyl-L-glutamate 5-semialdehyde + L-glutamate. Its pathway is amino-acid biosynthesis; L-arginine biosynthesis; N(2)-acetyl-L-ornithine from L-glutamate: step 4/4. The chain is Acetylornithine aminotransferase from Rhodobacter capsulatus (strain ATCC BAA-309 / NBRC 16581 / SB1003).